Consider the following 338-residue polypeptide: Envelope glycoprotein K (338 aa).

An N-terminal signal peptide occupies residues 1–30 (MLAVRSLQHLSTVVLITAYGLVLVWYTVFG). Residues 31–121 (ASPLHRCIYA…VNCLETLWYT (91 aa)) lie on the Extracellular side of the membrane. The interval 31–121 (ASPLHRCIYA…VNCLETLWYT (91 aa)) is involved in fusion. N-linked (GlcNAc...) asparagine; by host glycosylation is found at asparagine 48 and asparagine 58. The chain crosses the membrane as a helical span at residues 122–140 (RVRLVVVGWFLYLAFVALH). Residues 141 to 212 (QRRCMFGVVS…DPVTFLYHRP (72 aa)) are Cytoplasmic-facing. A helical transmembrane segment spans residues 213–233 (AIGVIVGCELIVRFVAVGLIV). Residues 234-243 (GTAFISRGAC) are Extracellular-facing. The chain crosses the membrane as a helical span at residues 244–264 (AITYPLFLTITTWCFVSTIGL). Over 265 to 301 (TELYCILRRGPAPKNADKAAAPGRSKGLSGVCGRCCS) the chain is Cytoplasmic. Residues 265-301 (TELYCILRRGPAPKNADKAAAPGRSKGLSGVCGRCCS) are interaction with UL20. A helical membrane pass occupies residues 302-322 (IILSGIAMRLCYIAVVAGVVL). Over 323-338 (VALHYEQEIQRRLFDV) the chain is Extracellular.

It belongs to the alphaherpesvirinae glycoprotein K family. In terms of assembly, interacts (via UL20 interaction region) with protein UL20 (via N-terminus); this interaction probably plays a role in the coordinate transport of protein UL20 and gK to the trans-Golgi network (TGN), and is required for the cell surface expression of gK. In terms of processing, N-glycosylated.

The protein resides in the host cell membrane. It is found in the host endosome membrane. It localises to the host Golgi apparatus membrane. Functionally, glycoprotein that probably modulates membrane fusion events during secondary envelopment of cytoplasmic capsids that bud into specific trans-Golgi network (TGN)-derived membranes. Also plays a role, together with gB, in virus-induced cell-to-cell fusion (syncytia formation). Seems to block fusion of virions with infected-cell membranes. This is Envelope glycoprotein K (gK) from Homo sapiens (Human).